Here is a 561-residue protein sequence, read N- to C-terminus: Asparagine synthetase [glutamine-hydrolyzing] (561 aa).

Residue cysteine 2 is the For GATase activity of the active site. The Glutamine amidotransferase type-2 domain maps to 2 to 191 (CGIWALFGSD…PGHYEVLDLK (190 aa)). L-glutamine-binding positions include 49–53 (RLAVV), 75–77 (NGE), and aspartate 97. In terms of domain architecture, Asparagine synthetase spans 213–536 (HAIYDSVEKL…PGRADWLTHY (324 aa)). ATP contacts are provided by residues leucine 256, isoleucine 288, and 363–364 (SG). Lysine 385 bears the N6-acetyllysine mark. Threonine 545 bears the Phosphothreonine mark. A Phosphoserine modification is found at serine 557.

It carries out the reaction L-aspartate + L-glutamine + ATP + H2O = L-asparagine + L-glutamate + AMP + diphosphate + H(+). It participates in amino-acid biosynthesis; L-asparagine biosynthesis; L-asparagine from L-aspartate (L-Gln route): step 1/1. This chain is Asparagine synthetase [glutamine-hydrolyzing] (Asns), found in Mus musculus (Mouse).